Here is a 419-residue protein sequence, read N- to C-terminus: Transcription regulator lscL (419 aa).

A DNA-binding region (zn(2)-C6 fungal-type) is located at residues 12 to 35; the sequence is RIRKVKCDEKKPCCQKCIDTGRTC.

It localises to the nucleus. Its function is as follows. Transcription factor that may coregulate the expression of the gene cluster that mediates the biosynthesis of the lipopeptide antibiotics leucinostatins that show extensive biological activities, including antimalarial, antiviral, antibacterial, antifungal, and antitumor activities, as well as phytotoxic. This chain is Transcription regulator lscL, found in Purpureocillium lilacinum (Paecilomyces lilacinus).